The sequence spans 1130 residues: Putative protein tag-278 (1130 aa).

Disordered regions lie at residues 1–92 (MSRS…DIDN), 104–129 (VARESSRNTSRNNSPQPAGRETELKR), and 974–1130 (NELI…AWKF). 2 coiled-coil regions span residues 121–779 (AGRE…EEIK) and 805–1061 (EERE…ARAK). The segment covering 983–993 (RQTDESTSEPH) has biased composition (basic and acidic residues). The span at 999 to 1011 (SITSHGVFQNFVS) shows a compositional bias: polar residues. Composition is skewed to basic and acidic residues over residues 1013-1057 (MKDK…EKSP) and 1068-1081 (RLRDRSPAKSKSDN). Over residues 1082–1095 (LESTPSSSSRNLLS) the composition is skewed to low complexity. Over residues 1116–1130 (TKKDSSSEKRPAWKF) the composition is skewed to basic and acidic residues.

In Caenorhabditis elegans, this protein is Putative protein tag-278 (tag-278).